The primary structure comprises 148 residues: Transcriptional regulator MraZ (148 aa).

2 SpoVT-AbrB domains span residues 5-51 and 80-123; these read VSIL…PEPN and AETL…NAEE.

This sequence belongs to the MraZ family. As to quaternary structure, forms oligomers.

The protein resides in the cytoplasm. The protein localises to the nucleoid. This Chromobacterium violaceum (strain ATCC 12472 / DSM 30191 / JCM 1249 / CCUG 213 / NBRC 12614 / NCIMB 9131 / NCTC 9757 / MK) protein is Transcriptional regulator MraZ.